We begin with the raw amino-acid sequence, 992 residues long: Aminopeptidase Q (992 aa).

Over glycine 2–arginine 13 the chain is Cytoplasmic. Residues alanine 14 to alanine 34 form a helical; Signal-anchor for type II membrane protein membrane-spanning segment. At alanine 35–threonine 992 the chain is on the extracellular side. Residues aspartate 47–glycine 92 form a disordered region. A glycan (N-linked (GlcNAc...) asparagine) is linked at asparagine 133. Residue glutamate 241 coordinates substrate. 4 N-linked (GlcNAc...) asparagine glycosylation sites follow: asparagine 262, asparagine 289, asparagine 347, and asparagine 361. Serine 380–asparagine 384 provides a ligand contact to substrate. Position 416 (histidine 416) interacts with Zn(2+). Glutamate 417 functions as the Proton acceptor in the catalytic mechanism. Positions 420 and 439 each coordinate Zn(2+). The active-site Proton donor is the tyrosine 505. N-linked (GlcNAc...) asparagine glycosylation is found at asparagine 555, asparagine 584, asparagine 602, asparagine 609, asparagine 655, asparagine 811, asparagine 850, and asparagine 889.

The protein belongs to the peptidase M1 family. Zn(2+) is required as a cofactor. Expressed in skin. Expression levels do not differ between dark and light skin areas.

It is found in the membrane. Metalloprotease which may be important for placentation by regulating biological activity of key peptides at the embryo-maternal interface. Involved in coat pigmentation patterns. During skin development, may be required to establish the periodicity of tabby markings, initiating a pre-pattern at or before hair follicle development. The protein is Aminopeptidase Q (LVRN) of Felis catus (Cat).